The sequence spans 423 residues: Histidine--tRNA ligase (423 aa).

Belongs to the class-II aminoacyl-tRNA synthetase family. In terms of assembly, homodimer.

The protein resides in the cytoplasm. It carries out the reaction tRNA(His) + L-histidine + ATP = L-histidyl-tRNA(His) + AMP + diphosphate + H(+). The chain is Histidine--tRNA ligase from Actinobacillus pleuropneumoniae serotype 7 (strain AP76).